A 101-amino-acid polypeptide reads, in one-letter code: Small ribosomal subunit protein uS10 (101 aa).

This sequence belongs to the universal ribosomal protein uS10 family. As to quaternary structure, part of the 30S ribosomal subunit.

In terms of biological role, involved in the binding of tRNA to the ribosomes. This Mycobacteroides abscessus (strain ATCC 19977 / DSM 44196 / CCUG 20993 / CIP 104536 / JCM 13569 / NCTC 13031 / TMC 1543 / L948) (Mycobacterium abscessus) protein is Small ribosomal subunit protein uS10.